Here is a 357-residue protein sequence, read N- to C-terminus: Protein RecA (357 aa).

73-80 (GPESSGKT) serves as a coordination point for ATP.

The protein belongs to the RecA family.

The protein resides in the cytoplasm. Functionally, can catalyze the hydrolysis of ATP in the presence of single-stranded DNA, the ATP-dependent uptake of single-stranded DNA by duplex DNA, and the ATP-dependent hybridization of homologous single-stranded DNAs. It interacts with LexA causing its activation and leading to its autocatalytic cleavage. The chain is Protein RecA from Methylibium petroleiphilum (strain ATCC BAA-1232 / LMG 22953 / PM1).